A 195-amino-acid chain; its full sequence is Imidazoleglycerol-phosphate dehydratase (195 aa).

This sequence belongs to the imidazoleglycerol-phosphate dehydratase family.

It is found in the cytoplasm. The enzyme catalyses D-erythro-1-(imidazol-4-yl)glycerol 3-phosphate = 3-(imidazol-4-yl)-2-oxopropyl phosphate + H2O. The protein operates within amino-acid biosynthesis; L-histidine biosynthesis; L-histidine from 5-phospho-alpha-D-ribose 1-diphosphate: step 6/9. The polypeptide is Imidazoleglycerol-phosphate dehydratase (Bordetella petrii (strain ATCC BAA-461 / DSM 12804 / CCUG 43448)).